A 391-amino-acid polypeptide reads, in one-letter code: Phosphoglycerate kinase (391 aa).

Substrate-binding positions include 21–23 (DLN), R36, 59–62 (HLGR), R113, and R146. ATP is bound by residues K197, E319, and 345–348 (GGDT).

The protein belongs to the phosphoglycerate kinase family. In terms of assembly, monomer.

The protein localises to the cytoplasm. It carries out the reaction (2R)-3-phosphoglycerate + ATP = (2R)-3-phospho-glyceroyl phosphate + ADP. Its pathway is carbohydrate degradation; glycolysis; pyruvate from D-glyceraldehyde 3-phosphate: step 2/5. In Xylella fastidiosa (strain 9a5c), this protein is Phosphoglycerate kinase.